The sequence spans 130 residues: MSKPRIALIAHDAKKDEIVALAGQYRNTLAQCRLVATGTTGGRIAAAHGLEVERKLSGPLGGDLQIGAELADGRVDVVVFLRDPMTAQPHDPDITALVRACDVHDVPVATNVATARMLLDDLARNMQDVC.

The MGS-like domain occupies 1-130 (MSKPRIALIA…DLARNMQDVC (130 aa)). Substrate-binding positions include histidine 11, lysine 15, 37-40 (TGTT), and 57-58 (SG). Aspartate 63 acts as the Proton donor/acceptor in catalysis. Position 90 (histidine 90) interacts with substrate.

Belongs to the methylglyoxal synthase family.

It catalyses the reaction dihydroxyacetone phosphate = methylglyoxal + phosphate. Functionally, catalyzes the formation of methylglyoxal from dihydroxyacetone phosphate. This is Methylglyoxal synthase from Burkholderia vietnamiensis (strain G4 / LMG 22486) (Burkholderia cepacia (strain R1808)).